The chain runs to 187 residues: uncharacterized protein (187 aa).

The helical transmembrane segment at 8 to 28 threads the bilayer; that stretch reads FFILLAINFILAAGFVALVLL.

The protein resides in the membrane. This is an uncharacterized protein from Bacillus subtilis (strain 168).